The sequence spans 532 residues: Nectin-4 (532 aa).

Positions 1–30 (MGPLHGALLPPISVTVSLLILLLCAPGGRC) are cleaved as a signal peptide. The 112-residue stretch at 31–142 (GVVHTEKSMT…GNFDAELELK (112 aa)) folds into the Ig-like V-type domain. Over 31–344 (GVVHTEKSMT…TKIDLVSVSL (314 aa)) the chain is Extracellular. 3 disulfides stabilise this stretch: Cys51–Cys125, Cys169–Cys221, and Cys266–Cys312. Ig-like C2-type domains lie at 146-235 (PPLP…KRIT) and 244-328 (AEVS…AIVS). Positions 152–179 (GPGPPLTEGEGKSLAASCTAEGNPAPTL) are disordered. 2 N-linked (GlcNAc...) asparagine glycosylation sites follow: Asn189 and Asn282. Residues 345-365 (GSVGILTAVLLVVLVITLLLV) traverse the membrane as a helical segment. Topologically, residues 366–532 (NRHHKRQTKQ…IYINGRGHLV (167 aa)) are cytoplasmic. The tract at residues 453–491 (QTELLSTVPDEEVKEDGEEPEQVEQSLEKEPNPTEPDGM) is disordered. Acidic residues predominate over residues 461–474 (PDEEVKEDGEEPEQ).

The protein belongs to the nectin family.

The protein localises to the cell membrane. Its function is as follows. May be involved in cell adhesion. The protein is Nectin-4 of Xenopus tropicalis (Western clawed frog).